Consider the following 85-residue polypeptide: MHTTRLKRVGGSVMLTVPPALLNALSLGTDNEVGMVIDNGRLIVEPYRRPQYSLAELLAQCDPNAEISAEEREWLDAPATGQEEI.

The SpoVT-AbrB domain occupies 4-49 (TRLKRVGGSVMLTVPPALLNALSLGTDNEVGMVIDNGRLIVEPYRR).

This sequence belongs to the PemI family. As to quaternary structure, forms a complex with cognate toxin PemK.

In terms of biological role, antitoxin component of a type II toxin-antitoxin (TA) system. Labile antitoxin that binds to its cognate PemK endoribonuclease toxin and neutralizes its activity. Responsible for the stable maintenance of the plasmid during cell division. Both PemI and PemK proteins bind to the promoter region of the pem operon to autoregulate their synthesis. This Escherichia coli protein is Antitoxin PemI (pemI).